The primary structure comprises 473 residues: Protein AUXIN RESPONSE 4 (473 aa).

Acidic residues predominate over residues 1–10 (MAIITEEEED). The interval 1–38 (MAIITEEEEDPKTLNPPKNKPKDSDFTKSESTMKNPKP) is disordered. Positions 29-38 (SESTMKNPKP) are enriched in polar residues. Residues 44 to 64 (FPFWFYFTVVVSLATIIFISL) form a helical membrane-spanning segment. Residues 119–283 (TVVIVHGLGL…DSSISPALPL (165 aa)) enclose the AB hydrolase-1 domain.

As to expression, most abundant in root tissue, lesser amounts in rosette leaves, stems and flowers and very little in mature siliques.

The protein resides in the endoplasmic reticulum membrane. Functionally, required for the auxin influx facilitator AUX1 polar trafficking and its asymmetric localization within the plasma membrane. Not involved in the PIN proteins localization. This chain is Protein AUXIN RESPONSE 4 (AXR4), found in Arabidopsis thaliana (Mouse-ear cress).